The primary structure comprises 312 residues: HPr kinase/phosphorylase (312 aa).

Residues His-141 and Lys-162 contribute to the active site. Residue 156 to 163 (GDSGIGKS) participates in ATP binding. Ser-163 is a binding site for Mg(2+). Asp-180 acts as the Proton acceptor; for phosphorylation activity. Proton donor; for dephosphorylation activity in catalysis. An important for the catalytic mechanism of both phosphorylation and dephosphorylation region spans residues 204 to 213 (LEIRGVGIID). Glu-205 is a binding site for Mg(2+). Arg-246 is a catalytic residue. An important for the catalytic mechanism of dephosphorylation region spans residues 267–272 (PVRVGR).

This sequence belongs to the HPrK/P family. Homohexamer. Mg(2+) is required as a cofactor.

The catalysed reaction is [HPr protein]-L-serine + ATP = [HPr protein]-O-phospho-L-serine + ADP + H(+). The enzyme catalyses [HPr protein]-O-phospho-L-serine + phosphate + H(+) = [HPr protein]-L-serine + diphosphate. In terms of biological role, catalyzes the ATP- as well as the pyrophosphate-dependent phosphorylation of a specific serine residue in HPr, a phosphocarrier protein of the phosphoenolpyruvate-dependent sugar phosphotransferase system (PTS). HprK/P also catalyzes the pyrophosphate-producing, inorganic phosphate-dependent dephosphorylation (phosphorolysis) of seryl-phosphorylated HPr (P-Ser-HPr). The two antagonistic activities of HprK/P are regulated by several intracellular metabolites, which change their concentration in response to the absence or presence of rapidly metabolisable carbon sources (glucose, fructose, etc.) in the growth medium. Therefore, by controlling the phosphorylation state of HPr, HPrK/P is a sensor enzyme that plays a major role in the regulation of carbon metabolism and sugar transport: it mediates carbon catabolite repression (CCR), and regulates PTS-catalyzed carbohydrate uptake and inducer exclusion. The chain is HPr kinase/phosphorylase from Pediococcus pentosaceus (strain ATCC 25745 / CCUG 21536 / LMG 10740 / 183-1w).